The sequence spans 159 residues: Ribosomal RNA large subunit methyltransferase H (159 aa).

S-adenosyl-L-methionine-binding positions include leucine 76, glycine 108, and 127–132 (FSKMTF).

This sequence belongs to the RNA methyltransferase RlmH family. In terms of assembly, homodimer.

It localises to the cytoplasm. It catalyses the reaction pseudouridine(1915) in 23S rRNA + S-adenosyl-L-methionine = N(3)-methylpseudouridine(1915) in 23S rRNA + S-adenosyl-L-homocysteine + H(+). Specifically methylates the pseudouridine at position 1915 (m3Psi1915) in 23S rRNA. In Clostridium tetani (strain Massachusetts / E88), this protein is Ribosomal RNA large subunit methyltransferase H.